The chain runs to 223 residues: Urease accessory protein UreF (223 aa).

This sequence belongs to the UreF family. UreD, UreF and UreG form a complex that acts as a GTP-hydrolysis-dependent molecular chaperone, activating the urease apoprotein by helping to assemble the nickel containing metallocenter of UreC. The UreE protein probably delivers the nickel.

The protein resides in the cytoplasm. Required for maturation of urease via the functional incorporation of the urease nickel metallocenter. In Rhizobium leguminosarum bv. viciae, this protein is Urease accessory protein UreF.